A 479-amino-acid polypeptide reads, in one-letter code: Glutamyl-tRNA reductase (479 aa).

Substrate-binding positions include 48 to 51 (TCNR), S104, 109 to 111 (ERQ), and Q115. C49 acts as the Nucleophile in catalysis. Position 189–194 (189–194 (GAGKMG)) interacts with NADP(+). A disordered region spans residues 417 to 455 (DAGRSLAEAPDADTPDLGEAPSRCPYMTHDPGGDGTETE).

It belongs to the glutamyl-tRNA reductase family. As to quaternary structure, homodimer.

It carries out the reaction (S)-4-amino-5-oxopentanoate + tRNA(Glu) + NADP(+) = L-glutamyl-tRNA(Glu) + NADPH + H(+). It participates in porphyrin-containing compound metabolism; protoporphyrin-IX biosynthesis; 5-aminolevulinate from L-glutamyl-tRNA(Glu): step 1/2. Catalyzes the NADPH-dependent reduction of glutamyl-tRNA(Glu) to glutamate 1-semialdehyde (GSA). The chain is Glutamyl-tRNA reductase from Salinibacter ruber (strain DSM 13855 / M31).